The following is a 173-amino-acid chain: Large ribosomal subunit protein uL10 (173 aa).

It belongs to the universal ribosomal protein uL10 family. In terms of assembly, part of the ribosomal stalk of the 50S ribosomal subunit. The N-terminus interacts with L11 and the large rRNA to form the base of the stalk. The C-terminus forms an elongated spine to which L12 dimers bind in a sequential fashion forming a multimeric L10(L12)X complex.

In terms of biological role, forms part of the ribosomal stalk, playing a central role in the interaction of the ribosome with GTP-bound translation factors. The sequence is that of Large ribosomal subunit protein uL10 from Chlorobaculum parvum (strain DSM 263 / NCIMB 8327) (Chlorobium vibrioforme subsp. thiosulfatophilum).